The primary structure comprises 366 residues: Mitochondrial substrate carrier family protein H (366 aa).

The span at 1–25 (MLSNSVNNNNNNNNINNSNSNNNDS) shows a compositional bias: low complexity. Residues 1–26 (MLSNSVNNNNNNNNINNSNSNNNDSN) are disordered. 3 Solcar repeats span residues 29–121 (KNVK…LKEY), 132–243 (NIYT…LKNK), and 259–360 (SPFF…IKQS). 6 helical membrane passes run 35-55 (MVAS…LDVV), 96-112 (GVTP…TIYF), 133-151 (IYTV…SASV), 175-192 (VAMA…IPLS), 262-282 (FINF…TTPI), and 340-357 (VAKV…FEYI).

The protein belongs to the mitochondrial carrier (TC 2.A.29) family.

It localises to the mitochondrion inner membrane. In terms of biological role, mitochondrial transporter required for glutathione import into mitochondria. In Dictyostelium discoideum (Social amoeba), this protein is Mitochondrial substrate carrier family protein H.